A 138-amino-acid chain; its full sequence is ATP synthase epsilon chain, chloroplastic (138 aa).

Belongs to the ATPase epsilon chain family. As to quaternary structure, F-type ATPases have 2 components, CF(1) - the catalytic core - and CF(0) - the membrane proton channel. CF(1) has five subunits: alpha(3), beta(3), gamma(1), delta(1), epsilon(1). CF(0) has three main subunits: a, b and c.

It is found in the plastid. Its subcellular location is the chloroplast thylakoid membrane. Produces ATP from ADP in the presence of a proton gradient across the membrane. The protein is ATP synthase epsilon chain, chloroplastic of Anthoceros angustus (Hornwort).